The chain runs to 124 residues: Small ribosomal subunit protein uS12 (124 aa).

D89 carries the post-translational modification 3-methylthioaspartic acid.

The protein belongs to the universal ribosomal protein uS12 family. In terms of assembly, part of the 30S ribosomal subunit. Contacts proteins S8 and S17. May interact with IF1 in the 30S initiation complex.

In terms of biological role, with S4 and S5 plays an important role in translational accuracy. Functionally, interacts with and stabilizes bases of the 16S rRNA that are involved in tRNA selection in the A site and with the mRNA backbone. Located at the interface of the 30S and 50S subunits, it traverses the body of the 30S subunit contacting proteins on the other side and probably holding the rRNA structure together. The combined cluster of proteins S8, S12 and S17 appears to hold together the shoulder and platform of the 30S subunit. This chain is Small ribosomal subunit protein uS12, found in Shewanella loihica (strain ATCC BAA-1088 / PV-4).